A 1102-amino-acid polypeptide reads, in one-letter code: Phosphatidylinositol 4,5-bisphosphate 3-kinase catalytic subunit gamma isoform (1102 aa).

The PI3K-ABD domain occupies 34 to 141; that stretch reads SMELIPIEFV…PGQIHLVQRH (108 aa). The region spanning 217 to 309 is the PI3K-RBD domain; sequence NNCIFIVIHR…GEEIHVVLDT (93 aa). The C2 PI3K-type domain occupies 357–521; that stretch reads CDRKFRVKIR…NSMSISILLD (165 aa). The PIK helical domain occupies 541–723; it reads DRVRAEMPNQ…AVILEAYLRG (183 aa). The 284-residue stretch at 797 to 1080 folds into the PI3K/PI4K catalytic domain; sequence AIEKCKVMAS…QIEVCRDKGW (284 aa). The G-loop stretch occupies residues 803–809; the sequence is VMASKKK. Residues 829-838 and 864-872 each bind ATP; these read GIIFKHGDDL and LLPYGCIST. Positions 943–951 are catalytic loop; sequence GIGDRHNDN. 961 to 969 provides a ligand contact to ATP; the sequence is FHIDFGHIL. The segment at 962-988 is activation loop; the sequence is HIDFGHILGNYKSFLGINKERVPFVLT. Phosphothreonine; by PKA is present on Thr1024. A Phosphoserine; by autocatalysis modification is found at Ser1101.

It belongs to the PI3/PI4-kinase family. Heterodimer of a catalytic subunit PIK3CG and a PIK3R5 or PIK3R6 regulatory subunit. Interacts with GRK2 through the PIK helical domain. Interaction with GRK2 is required for targeting to agonist-occupied receptor. Interacts with PDE3B; regulates PDE3B activity and thereby cAMP levels in cells. Interacts with TPM2. Interacts with EPHA8; regulates integrin-mediated cell adhesion to substrate. Interacts with HRAS; the interaction is required for membrane recruitment and beta-gamma G protein dimer-dependent activation of the PI3K gamma complex PIK3CG:PIK3R6. Post-translationally, autophosphorylation at Ser-1101 has no effect on the phosphatidylinositol-4,5-bisphosphate 3-kinase activity. Pancreas, skeletal muscle, liver and heart.

It localises to the cytoplasm. The protein resides in the cell membrane. The enzyme catalyses a 1,2-diacyl-sn-glycero-3-phospho-(1D-myo-inositol) + ATP = a 1,2-diacyl-sn-glycero-3-phospho-(1D-myo-inositol-3-phosphate) + ADP + H(+). The catalysed reaction is a 1,2-diacyl-sn-glycero-3-phospho-(1D-myo-inositol-4,5-bisphosphate) + ATP = a 1,2-diacyl-sn-glycero-3-phospho-(1D-myo-inositol-3,4,5-trisphosphate) + ADP + H(+). It carries out the reaction a 1,2-diacyl-sn-glycero-3-phospho-(1D-myo-inositol 4-phosphate) + ATP = a 1,2-diacyl-sn-glycero-3-phospho-(1D-myo-inositol-3,4-bisphosphate) + ADP + H(+). It catalyses the reaction L-seryl-[protein] + ATP = O-phospho-L-seryl-[protein] + ADP + H(+). The protein operates within phospholipid metabolism; phosphatidylinositol phosphate biosynthesis. Activated by both the alpha and the beta-gamma G proteins following stimulation of G protein-coupled receptors (GPCRs). Activation by GPCRs is assisted by the regulatory subunits (PIK3R5 or PIK3R6) leading to the translocation from the cytosol to the plasma membrane and to kinase activation. Inhibited by AS-604850 and AS-605240. Its function is as follows. Phosphoinositide-3-kinase (PI3K) that phosphorylates PtdIns(4,5)P2 (Phosphatidylinositol 4,5-bisphosphate) to generate phosphatidylinositol 3,4,5-trisphosphate (PIP3). PIP3 plays a key role by recruiting PH domain-containing proteins to the membrane, including AKT1 and PDPK1, activating signaling cascades involved in cell growth, survival, proliferation, motility and morphology. Links G-protein coupled receptor activation to PIP3 production. Involved in immune, inflammatory and allergic responses. Modulates leukocyte chemotaxis to inflammatory sites and in response to chemoattractant agents. May control leukocyte polarization and migration by regulating the spatial accumulation of PIP3 and by regulating the organization of F-actin formation and integrin-based adhesion at the leading edge. Controls motility of dendritic cells. Together with PIK3CD is involved in natural killer (NK) cell development and migration towards the sites of inflammation. Participates in T-lymphocyte migration. Regulates T-lymphocyte proliferation, activation, and cytokine production. Together with PIK3CD participates in T-lymphocyte development. Required for B-lymphocyte development and signaling. Together with PIK3CD participates in neutrophil respiratory burst. Together with PIK3CD is involved in neutrophil chemotaxis and extravasation. Together with PIK3CB promotes platelet aggregation and thrombosis. Regulates alpha-IIb/beta-3 integrins (ITGA2B/ ITGB3) adhesive function in platelets downstream of P2Y12 through a lipid kinase activity-independent mechanism. May have also a lipid kinase activity-dependent function in platelet aggregation. Involved in endothelial progenitor cell migration. Negative regulator of cardiac contractility. Modulates cardiac contractility by anchoring protein kinase A (PKA) and PDE3B activation, reducing cAMP levels. Regulates cardiac contractility also by promoting beta-adrenergic receptor internalization by binding to GRK2 and by non-muscle tropomyosin phosphorylation. Also has serine/threonine protein kinase activity: both lipid and protein kinase activities are required for beta-adrenergic receptor endocytosis. May also have a scaffolding role in modulating cardiac contractility. Contributes to cardiac hypertrophy under pathological stress. Through simultaneous binding of PDE3B to RAPGEF3 and PIK3R6 is assembled in a signaling complex in which the PI3K gamma complex is activated by RAPGEF3 and which is involved in angiogenesis. In neutrophils, participates in a phospholipase C-activating N-formyl peptide-activated GPCR (G protein-coupled receptor) signaling pathway downstream of RASGRP4-mediated Ras-activation, to promote neutrophil functional responses. The sequence is that of Phosphatidylinositol 4,5-bisphosphate 3-kinase catalytic subunit gamma isoform (PIK3CG) from Homo sapiens (Human).